A 467-amino-acid chain; its full sequence is Argininosuccinate lyase (467 aa).

This sequence belongs to the lyase 1 family. Argininosuccinate lyase subfamily.

It is found in the cytoplasm. It catalyses the reaction 2-(N(omega)-L-arginino)succinate = fumarate + L-arginine. It participates in amino-acid biosynthesis; L-arginine biosynthesis; L-arginine from L-ornithine and carbamoyl phosphate: step 3/3. This chain is Argininosuccinate lyase, found in Anaeromyxobacter dehalogenans (strain 2CP-C).